Reading from the N-terminus, the 248-residue chain is 3-deoxy-manno-octulosonate cytidylyltransferase (248 aa).

Belongs to the KdsB family.

It is found in the cytoplasm. It carries out the reaction 3-deoxy-alpha-D-manno-oct-2-ulosonate + CTP = CMP-3-deoxy-beta-D-manno-octulosonate + diphosphate. The protein operates within nucleotide-sugar biosynthesis; CMP-3-deoxy-D-manno-octulosonate biosynthesis; CMP-3-deoxy-D-manno-octulosonate from 3-deoxy-D-manno-octulosonate and CTP: step 1/1. It functions in the pathway bacterial outer membrane biogenesis; lipopolysaccharide biosynthesis. Its function is as follows. Activates KDO (a required 8-carbon sugar) for incorporation into bacterial lipopolysaccharide in Gram-negative bacteria. The sequence is that of 3-deoxy-manno-octulosonate cytidylyltransferase from Alteromonas mediterranea (strain DSM 17117 / CIP 110805 / LMG 28347 / Deep ecotype).